We begin with the raw amino-acid sequence, 296 residues long: Probable cell wall protein PGA41 (296 aa).

The N-terminal stretch at methionine 1–alanine 18 is a signal peptide. Positions isoleucine 146–threonine 212 are enriched in low complexity. The interval isoleucine 146–alanine 276 is disordered. Residues glutamine 220–valine 245 show a composition bias toward gly residues. 2 N-linked (GlcNAc...) asparagine glycosylation sites follow: asparagine 229 and asparagine 268. Over residues asparagine 247 to proline 274 the composition is skewed to low complexity. Glycine 275 is lipidated: GPI-anchor amidated glycine. Residues alanine 276 to isoleucine 296 constitute a propeptide, removed in mature form.

The protein belongs to the IHD1 family. In terms of processing, the GPI-anchor is attached to the protein in the endoplasmic reticulum and serves to target the protein to the cell surface. There, the glucosamine-inositol phospholipid moiety is cleaved off and the GPI-modified mannoprotein is covalently attached via its lipidless GPI glycan remnant to the 1,6-beta-glucan of the outer cell wall layer.

Its subcellular location is the secreted. The protein resides in the cell wall. The protein localises to the membrane. In terms of biological role, probable GPI-anchored cell wall protein that may be involved in cell wall organization, hyphal growth, as well as in virulence. This is Probable cell wall protein PGA41 (PGA41) from Candida albicans (strain SC5314 / ATCC MYA-2876) (Yeast).